Reading from the N-terminus, the 201-residue chain is 3-isopropylmalate dehydratase small subunit 1 (201 aa).

Belongs to the LeuD family. LeuD type 1 subfamily. In terms of assembly, heterodimer of LeuC and LeuD.

The enzyme catalyses (2R,3S)-3-isopropylmalate = (2S)-2-isopropylmalate. The protein operates within amino-acid biosynthesis; L-leucine biosynthesis; L-leucine from 3-methyl-2-oxobutanoate: step 2/4. Functionally, catalyzes the isomerization between 2-isopropylmalate and 3-isopropylmalate, via the formation of 2-isopropylmaleate. In Salmonella typhimurium (strain LT2 / SGSC1412 / ATCC 700720), this protein is 3-isopropylmalate dehydratase small subunit 1.